Consider the following 720-residue polypeptide: Glycine--tRNA ligase beta subunit (720 aa).

It belongs to the class-II aminoacyl-tRNA synthetase family. In terms of assembly, tetramer of two alpha and two beta subunits.

The protein resides in the cytoplasm. It carries out the reaction tRNA(Gly) + glycine + ATP = glycyl-tRNA(Gly) + AMP + diphosphate. This Acidovorax ebreus (strain TPSY) (Diaphorobacter sp. (strain TPSY)) protein is Glycine--tRNA ligase beta subunit.